A 135-amino-acid chain; its full sequence is Transcription antitermination protein NusB (135 aa).

The protein belongs to the NusB family.

Its function is as follows. Involved in transcription antitermination. Required for transcription of ribosomal RNA (rRNA) genes. Binds specifically to the boxA antiterminator sequence of the ribosomal RNA (rrn) operons. This Wolinella succinogenes (strain ATCC 29543 / DSM 1740 / CCUG 13145 / JCM 31913 / LMG 7466 / NCTC 11488 / FDC 602W) (Vibrio succinogenes) protein is Transcription antitermination protein NusB.